Consider the following 207-residue polypeptide: Pyridoxal 5'-phosphate synthase subunit PdxT (207 aa).

An L-glutamine-binding site is contributed by 51–53; sequence GES. The active-site Nucleophile is cysteine 83. L-glutamine is bound by residues arginine 112 and 143–144; that span reads IR. Catalysis depends on charge relay system residues histidine 184 and glutamate 186.

This sequence belongs to the glutaminase PdxT/SNO family. As to quaternary structure, in the presence of PdxS, forms a dodecamer of heterodimers. Only shows activity in the heterodimer.

The catalysed reaction is aldehydo-D-ribose 5-phosphate + D-glyceraldehyde 3-phosphate + L-glutamine = pyridoxal 5'-phosphate + L-glutamate + phosphate + 3 H2O + H(+). It carries out the reaction L-glutamine + H2O = L-glutamate + NH4(+). Its pathway is cofactor biosynthesis; pyridoxal 5'-phosphate biosynthesis. Functionally, catalyzes the hydrolysis of glutamine to glutamate and ammonia as part of the biosynthesis of pyridoxal 5'-phosphate. The resulting ammonia molecule is channeled to the active site of PdxS. The polypeptide is Pyridoxal 5'-phosphate synthase subunit PdxT (Kineococcus radiotolerans (strain ATCC BAA-149 / DSM 14245 / SRS30216)).